A 287-amino-acid chain; its full sequence is Putative ankyrin repeat protein R791 (287 aa).

ANK repeat units lie at residues 40–71 (HNFN…PLVF), 76–105 (NVHD…NIET), 107–134 (NDDV…IDNK), 135–164 (TIFE…DIKA), 165–194 (KDNF…TIDI), 196–224 (DDTY…DYRT), and 225–254 (VDDL…DIEA).

The chain is Putative ankyrin repeat protein R791 from Acanthamoeba polyphaga (Amoeba).